The following is a 60-amino-acid chain: Ferredoxin (60 aa).

4Fe-4S ferredoxin-type domains follow at residues 2–30 (VTID…EIQG) and 31–60 (DKVV…TVKE). 8 residues coordinate [4Fe-4S] cluster: Cys-9, Cys-14, Cys-17, Cys-21, Cys-41, Cys-44, Cys-47, and Cys-51.

It depends on [4Fe-4S] cluster as a cofactor.

Functionally, ferredoxins are iron-sulfur proteins that transfer electrons probably in the CO-dehydrogenase complex. The protein is Ferredoxin of Methanothermococcus thermolithotrophicus (Methanococcus thermolithotrophicus).